The following is a 187-amino-acid chain: Ribosome-recycling factor (187 aa).

This sequence belongs to the RRF family.

It localises to the cytoplasm. In terms of biological role, responsible for the release of ribosomes from messenger RNA at the termination of protein biosynthesis. May increase the efficiency of translation by recycling ribosomes from one round of translation to another. In Methylorubrum populi (strain ATCC BAA-705 / NCIMB 13946 / BJ001) (Methylobacterium populi), this protein is Ribosome-recycling factor.